Here is a 611-residue protein sequence, read N- to C-terminus: Dihydroxy-acid dehydratase (611 aa).

Residue Asp-81 participates in Mg(2+) binding. Cys-122 is a [2Fe-2S] cluster binding site. Mg(2+) is bound by residues Asp-123 and Lys-124. At Lys-124 the chain carries N6-carboxylysine. Cys-195 serves as a coordination point for [2Fe-2S] cluster. A Mg(2+)-binding site is contributed by Glu-491. Residue Ser-517 is the Proton acceptor of the active site.

Belongs to the IlvD/Edd family. Homodimer. The cofactor is [2Fe-2S] cluster. It depends on Mg(2+) as a cofactor.

The catalysed reaction is (2R)-2,3-dihydroxy-3-methylbutanoate = 3-methyl-2-oxobutanoate + H2O. It carries out the reaction (2R,3R)-2,3-dihydroxy-3-methylpentanoate = (S)-3-methyl-2-oxopentanoate + H2O. The protein operates within amino-acid biosynthesis; L-isoleucine biosynthesis; L-isoleucine from 2-oxobutanoate: step 3/4. It participates in amino-acid biosynthesis; L-valine biosynthesis; L-valine from pyruvate: step 3/4. Functionally, functions in the biosynthesis of branched-chain amino acids. Catalyzes the dehydration of (2R,3R)-2,3-dihydroxy-3-methylpentanoate (2,3-dihydroxy-3-methylvalerate) into 2-oxo-3-methylpentanoate (2-oxo-3-methylvalerate) and of (2R)-2,3-dihydroxy-3-methylbutanoate (2,3-dihydroxyisovalerate) into 2-oxo-3-methylbutanoate (2-oxoisovalerate), the penultimate precursor to L-isoleucine and L-valine, respectively. This Brucella canis (strain ATCC 23365 / NCTC 10854 / RM-666) protein is Dihydroxy-acid dehydratase.